Reading from the N-terminus, the 301-residue chain is MLTFQQIIFKLQTFWADKGCTVIQPFDMEVGAGTSHPATCLRALGPEPWFAAYVQPSRRPKDGRYGDNPNRLQHYYQFQVALKPAPANIQDLYLDSLRELGIDPKVHDIRFVEDDWENPTLGAWGLGWEVWLNGMEVTQFTYFQQVGGIDCTPVLGEITYGIERLAMYLQGVENVYDLVWAKTLDGNTVTYGDVYHQNEVEQSTYNFEYSDADWLLRQFNDYEAQAKRLLAEENAALALPAYELVLKAGHTFNLLDARGAISVTERATYIGRIRALSRAVAQKYVESREKLGFPLMKANAA.

This sequence belongs to the class-II aminoacyl-tRNA synthetase family. As to quaternary structure, tetramer of two alpha and two beta subunits.

The protein resides in the cytoplasm. The catalysed reaction is tRNA(Gly) + glycine + ATP = glycyl-tRNA(Gly) + AMP + diphosphate. This is Glycine--tRNA ligase alpha subunit from Neisseria meningitidis serogroup C (strain 053442).